A 36-amino-acid polypeptide reads, in one-letter code: Probable non-specific lipid-transfer protein (36 aa).

Belongs to the plant LTP family. In terms of processing, phosphorylated by Ca(2+)-dependent protein kinase.

In terms of biological role, plant non-specific lipid-transfer proteins transfer phospholipids as well as galactolipids across membranes. May play a role in wax or cutin deposition in the cell walls of expanding epidermal cells and certain secretory tissues. This Pinus pinea (Italian stone pine) protein is Probable non-specific lipid-transfer protein.